The following is a 393-amino-acid chain: uncharacterized protein (393 aa).

[4Fe-4S] cluster is bound by residues cysteine 9, cysteine 15, cysteine 18, and cysteine 97. 4 residues coordinate S-adenosyl-L-methionine: glutamine 231, tyrosine 258, glutamate 279, and aspartate 325. Cysteine 352 serves as the catalytic Nucleophile.

This sequence belongs to the class I-like SAM-binding methyltransferase superfamily. RNA M5U methyltransferase family.

This is an uncharacterized protein from Leptospira interrogans serogroup Icterohaemorrhagiae serovar Lai (strain 56601).